A 246-amino-acid chain; its full sequence is Phosphomannomutase 2 (246 aa).

N-acetylalanine is present on Ala-2. Asp-12 functions as the Nucleophile in the catalytic mechanism. Mg(2+) contacts are provided by Asp-12 and Asp-14. Asp-14 (proton donor/acceptor) is an active-site residue. Alpha-D-mannose 1-phosphate contacts are provided by Arg-21, Arg-123, Arg-134, and Arg-141. An N6-acetyllysine modification is found at Lys-149. Residues Ser-179 and Asp-181 each contribute to the alpha-D-mannose 1-phosphate site. Mg(2+)-binding residues include Asp-209, Phe-221, Asp-223, and Thr-226.

Belongs to the eukaryotic PMM family. As to quaternary structure, homodimer.

Its subcellular location is the cytoplasm. It carries out the reaction alpha-D-mannose 1-phosphate = D-mannose 6-phosphate. Its pathway is nucleotide-sugar biosynthesis; GDP-alpha-D-mannose biosynthesis; alpha-D-mannose 1-phosphate from D-fructose 6-phosphate: step 2/2. Its function is as follows. Involved in the synthesis of the GDP-mannose and dolichol-phosphate-mannose required for a number of critical mannosyl transfer reactions. In Macaca fascicularis (Crab-eating macaque), this protein is Phosphomannomutase 2 (PMM2).